We begin with the raw amino-acid sequence, 649 residues long: tRNA-guanine(15) transglycosylase (649 aa).

The active-site Nucleophile is the aspartate 88. Residues aspartate 123 and alanine 194 each contribute to the substrate site. The Zn(2+) site is built by cysteine 280, cysteine 282, and cysteine 285. The region spanning 573-648 (KYRIVIDSSV…VAATLRGGLK (76 aa)) is the PUA domain.

This sequence belongs to the archaeosine tRNA-ribosyltransferase family. The cofactor is Zn(2+).

The catalysed reaction is guanosine(15) in tRNA + 7-cyano-7-deazaguanine = 7-cyano-7-carbaguanosine(15) in tRNA + guanine. Its pathway is tRNA modification; archaeosine-tRNA biosynthesis. Functionally, exchanges the guanine residue with 7-cyano-7-deazaguanine (preQ0) at position 15 in the dihydrouridine loop (D-loop) of archaeal tRNAs. This Methanococcus maripaludis (strain C6 / ATCC BAA-1332) protein is tRNA-guanine(15) transglycosylase.